Here is a 355-residue protein sequence, read N- to C-terminus: Uroporphyrinogen decarboxylase (355 aa).

Substrate is bound by residues 27–31, F46, D77, Y154, S209, and H327; that span reads RQAGR.

Belongs to the uroporphyrinogen decarboxylase family. In terms of assembly, homodimer.

The protein localises to the cytoplasm. The enzyme catalyses uroporphyrinogen III + 4 H(+) = coproporphyrinogen III + 4 CO2. It participates in porphyrin-containing compound metabolism; protoporphyrin-IX biosynthesis; coproporphyrinogen-III from 5-aminolevulinate: step 4/4. Its function is as follows. Catalyzes the decarboxylation of four acetate groups of uroporphyrinogen-III to yield coproporphyrinogen-III. The polypeptide is Uroporphyrinogen decarboxylase (Nitrosomonas europaea (strain ATCC 19718 / CIP 103999 / KCTC 2705 / NBRC 14298)).